Reading from the N-terminus, the 20-residue chain is DELTA-actitoxin-Afr1b (20 aa).

It belongs to the actinoporin family. Sea anemone subfamily. Octamer or nonamer in membranes. Monomer in the soluble state.

The protein resides in the secreted. It is found in the nematocyst. It localises to the target cell membrane. Functionally, pore-forming toxin (PFT) that consists of a crown-shaped octamer or nonamer that forms cation-selective hydrophilic pores of about 1.5 nm (inside) and 13 nm (outside) and causes cytolysis. It causes cardiac stimulation. Also causes hemolysis (HC(50)=0.4 nM). Interestingly, the Phe-16 is crucial for hemolysis. Pore formation is a multi-step process that involves specific recognition of membrane sphingomyelin (but neither cholesterol nor phosphatidylcholine) using aromatic rich region and adjacent phosphocholine (POC) binding site, firm binding to the membrane (mainly driven by hydrophobic interactions) accompanied by the transfer of the N-terminal region to the lipid-water interface and finally pore formation after oligomerization of monomers. It is probable that a dimeric form is an assembly intermediate before the complete oligomerization. The formation of stable pores occurs only in vesicles composed of DOPC/SM (there is no oligomerization when the PFT is treated with vesicles of DOPC or SM alone). The transmembrane pore displays 8 lateral perforations, one at each subunit-subunit interface, partially occupied by the acyl-chain region of a bridging lipid. Each pore contains 24 lipid molecules, firmly bound to each subunit, that is, 3 lipids (L1, L2, L3, L4 and/or L5) are associated to each subunit. Lipid L1 bridges 2 subunits, whereas lipids L2 and L3 bind to sites at single subunit. The protein is DELTA-actitoxin-Afr1b of Actinia fragacea (Strawberry anemone).